The sequence spans 314 residues: CD-NTase-associated protein 12 (314 aa).

The TIR domain occupies R5–K129. The interval S160–N314 is STING domain. 3',3'-c-di-GMP is bound by residues F171, P234, and D252.

In the C-terminal section; belongs to the bacterial STING family. In terms of assembly, homodimer. Forms homodimers; in the presence of c-di-GMP forms filaments with an ordered array of parallel-stacked subunits.

It catalyses the reaction NAD(+) + H2O = ADP-D-ribose + nicotinamide + H(+). With respect to regulation, NAD(+) hydrolase activity is strongly stimulated by c-di-GMP, weakly by 3'3'-cGAMP, very weakly by c-di-AMP but not at all by 2'3'-cGAMP. Self-association of TIR domains is required for NADase activity. Functionally, effector protein of a CBASS antiviral system with NAD(+) hydrolase activity. CBASS (cyclic oligonucleotide-based antiphage signaling system) provides immunity against bacteriophage. The CD-NTase protein synthesizes cyclic nucleotides in response to infection; these serve as specific second messenger signals. The signals activate a diverse range of effectors, leading to bacterial cell death and thus abortive phage infection. A type I-(GG) CBASS system. Its function is as follows. Binds c-di-GMP (synthesized by the cognate CdnE encoded upstream in the same operon), and about 10-fold less well 3'3'-cGAMP, but not c-di-AMP, 2'-3'-cGAMP or cUMP-AMP (tested without the N-terminal TIR domain). Upon activation by c-di-GMP forms filaments which hydrolyze NAD(+); filament formation is required for enzyme activation. The protein is CD-NTase-associated protein 12 of Capnocytophaga granulosa (strain ATCC 51502 / DSM 11449 / JCM 8566 / LMG 16022 / NCTC 12948 / B0611).